Here is a 161-residue protein sequence, read N- to C-terminus: GTP-dependent dephospho-CoA kinase (161 aa).

The GTP site is built by D37, I38, D56, K58, E112, and D135.

It belongs to the GTP-dependent DPCK family.

It carries out the reaction 3'-dephospho-CoA + GTP = GDP + CoA + H(+). Its pathway is cofactor biosynthesis; coenzyme A biosynthesis. Catalyzes the GTP-dependent phosphorylation of the 3'-hydroxyl group of dephosphocoenzyme A to form coenzyme A (CoA). The protein is GTP-dependent dephospho-CoA kinase of Methanococcus aeolicus (strain ATCC BAA-1280 / DSM 17508 / OCM 812 / Nankai-3).